A 172-amino-acid chain; its full sequence is C-phycocyanin beta chain (172 aa).

N4-methylasparagine is present on Asn72. The (2R,3E)-phycocyanobilin site is built by Cys82 and Cys153.

Belongs to the phycobiliprotein family. In terms of assembly, heterodimer of an alpha and a beta subunit, which further assembles into trimers and the trimers into hexamers. The basic functional unit of phycobiliproteins is a ring-shaped hexamer formed from two back-to-back trimers contacting via the alpha chain subunits. The trimers are composed of alpha/beta subunit heterodimers arranged around a three-fold axis of symmetry. The phycoerythrins also contain a gamma subunit which is located in the center of the hexamer. In terms of processing, contains two covalently linked bilin chromophores.

The protein resides in the plastid. Its subcellular location is the chloroplast thylakoid membrane. Its function is as follows. Light-harvesting photosynthetic bile pigment-protein from the phycobiliprotein complex (phycobilisome, PBS). Phycocyanin is the major phycobiliprotein in the PBS rod. This chain is C-phycocyanin beta chain (cpcB), found in Pyropia yezoensis (Susabi-nori).